A 124-amino-acid polypeptide reads, in one-letter code: NADH-quinone oxidoreductase subunit A (124 aa).

3 helical membrane-spanning segments follow: residues 11-31, 68-88, and 93-113; these read YLPI…IMIL, LVAI…PWAI, and IGKI…IGFV.

The protein belongs to the complex I subunit 3 family. As to quaternary structure, NDH-1 is composed of 14 different subunits. Subunits NuoA, H, J, K, L, M, N constitute the membrane sector of the complex.

The protein resides in the cell inner membrane. The catalysed reaction is a quinone + NADH + 5 H(+)(in) = a quinol + NAD(+) + 4 H(+)(out). Functionally, NDH-1 shuttles electrons from NADH, via FMN and iron-sulfur (Fe-S) centers, to quinones in the respiratory chain. The immediate electron acceptor for the enzyme in this species is believed to be ubiquinone. Couples the redox reaction to proton translocation (for every two electrons transferred, four hydrogen ions are translocated across the cytoplasmic membrane), and thus conserves the redox energy in a proton gradient. This Rickettsia bellii (strain RML369-C) protein is NADH-quinone oxidoreductase subunit A.